The primary structure comprises 425 residues: Serine--tRNA ligase 1 (425 aa).

Residue 230 to 232 coordinates L-serine; the sequence is TSE. ATP is bound by residues 261–263 and Val-277; that span reads RRE. Residue Glu-284 participates in L-serine binding. ATP is bound at residue 348 to 351; sequence ELTS. Position 382 (Thr-382) interacts with L-serine.

The protein belongs to the class-II aminoacyl-tRNA synthetase family. Type-1 seryl-tRNA synthetase subfamily. As to quaternary structure, homodimer. The tRNA molecule binds across the dimer.

It localises to the cytoplasm. The enzyme catalyses tRNA(Ser) + L-serine + ATP = L-seryl-tRNA(Ser) + AMP + diphosphate + H(+). It catalyses the reaction tRNA(Sec) + L-serine + ATP = L-seryl-tRNA(Sec) + AMP + diphosphate + H(+). Its pathway is aminoacyl-tRNA biosynthesis; selenocysteinyl-tRNA(Sec) biosynthesis; L-seryl-tRNA(Sec) from L-serine and tRNA(Sec): step 1/1. Catalyzes the attachment of serine to tRNA(Ser). Is also able to aminoacylate tRNA(Sec) with serine, to form the misacylated tRNA L-seryl-tRNA(Sec), which will be further converted into selenocysteinyl-tRNA(Sec). This Streptomyces avermitilis (strain ATCC 31267 / DSM 46492 / JCM 5070 / NBRC 14893 / NCIMB 12804 / NRRL 8165 / MA-4680) protein is Serine--tRNA ligase 1.